Here is a 353-residue protein sequence, read N- to C-terminus: Vomeronasal type-1 receptor 1 (353 aa).

Over 1–56 (MVGDTLKLLSPLMTRYFFLLFYSTDSSDLNENQHPLDFDEMAFGKVKSGISFLIQT) the chain is Extracellular. A helical membrane pass occupies residues 57–77 (GVGILGNSFLLCFYNLILFTG). The Cytoplasmic portion of the chain corresponds to 78-84 (HKLRPTD). Residues 85–105 (LILSQLALANSMVLFFKGIPQ) traverse the membrane as a helical segment. Topologically, residues 106 to 132 (TMAAFGLKYLLNDTGCKFVFYYHRVGT) are extracellular. Asn-117 carries an N-linked (GlcNAc...) asparagine glycan. A helical transmembrane segment spans residues 133–153 (RVSLSTICLLNGFQAIKLNPS). Topologically, residues 154-169 (ICRWMEIKIRSPRFID) are cytoplasmic. The helical transmembrane segment at 170 to 190 (FCCLLCWAPHVLMNASVLLLV) threads the bilayer. At 191–226 (NGPLNSKNSSAKNNYGYCSYKASKRFSSLHAVLYFS) the chain is on the extracellular side. N-linked (GlcNAc...) asparagine glycosylation is present at Asn-198. A helical transmembrane segment spans residues 227–247 (PDFMSLGFMVWASGSMVFFLY). The Cytoplasmic segment spans residues 248-274 (RHKQQVQHNHSNRLSCRPSQEARATHT). Residues 275 to 295 (IMVLVSSFFVFYSVHSFLTIW) form a helical membrane-spanning segment. The Extracellular segment spans residues 296 to 303 (TTVVANPG). The helical transmembrane segment at 304 to 324 (QWIVTNSVLVASCFPARSPFV) threads the bilayer. The Cytoplasmic segment spans residues 325–353 (LIMSDTHISQFCFACRTRKTLFPNLVVMP).

This sequence belongs to the G-protein coupled receptor 1 family. Expressed in the olfactory mucosa, very low expression in brain, lung and kidney.

Its subcellular location is the cell membrane. In terms of biological role, putative pheromone receptor. The chain is Vomeronasal type-1 receptor 1 (VN1R1) from Homo sapiens (Human).